A 251-amino-acid chain; its full sequence is Histocompatibility antigen 60b (251 aa).

Positions M1–S24 are cleaved as a signal peptide. The Extracellular portion of the chain corresponds to T25–T212. 4 N-linked (GlcNAc...) asparagine glycosylation sites follow: N63, N93, N126, and N189. A helical transmembrane segment spans residues W213–W233. Topologically, residues C234–T251 are cytoplasmic.

It belongs to the NKG2D ligand family. In terms of tissue distribution, in strain C57BL/6J, strongly expressed in cardiac muscle and skeletal muscle, with lower expression levels in spleen, liver, kidney and thymus. In strain BALB/cJ, weakly expressed in cardiac muscle, spleen, kidney and thymus.

The protein localises to the cell membrane. Ligand for the KLRK1 immunosurveillance receptor. Binding to KLRK1 stimulates cell lysis in vitro. The chain is Histocompatibility antigen 60b from Mus musculus (Mouse).